A 1217-amino-acid chain; its full sequence is WD repeat-containing protein on Y chromosome (1217 aa).

WD repeat units follow at residues 155-199 (EDMT…LRSA), 323-362 (RIPL…EPSA), 366-405 (GHNG…LLQT), 456-495 (THAA…RKII), 508-547 (TIDI…VVRN), 595-635 (FHTD…RRYN), 740-779 (KVGD…IPEA), and 823-862 (GHLK…LGTL). Disordered regions lie at residues 910-929 (QVKR…VEDT) and 1033-1217 (AGGQ…KDKP). Positions 919–929 (EREDEGEVEDT) are enriched in acidic residues. 3 stretches are compositionally biased toward polar residues: residues 1041 to 1054 (RASS…TNSI), 1085 to 1107 (FGPN…SQLK), and 1137 to 1179 (PVST…TSAN). A compositionally biased stretch (low complexity) spans 1181–1190 (KPDIMPVKIK). The segment covering 1198–1210 (RNTAPVQITTSIA) has biased composition (polar residues).

This Drosophila mojavensis (Fruit fly) protein is WD repeat-containing protein on Y chromosome.